A 320-amino-acid polypeptide reads, in one-letter code: Aspartate carbamoyltransferase catalytic subunit (320 aa).

The carbamoyl phosphate site is built by Arg57 and Thr58. Lys85 lines the L-aspartate pocket. Carbamoyl phosphate-binding residues include Arg107, His141, and Gln144. 2 residues coordinate L-aspartate: Arg174 and Arg228. Residues Gly269 and Pro270 each coordinate carbamoyl phosphate.

The protein belongs to the aspartate/ornithine carbamoyltransferase superfamily. ATCase family. Heterododecamer (2C3:3R2) of six catalytic PyrB chains organized as two trimers (C3), and six regulatory PyrI chains organized as three dimers (R2).

The catalysed reaction is carbamoyl phosphate + L-aspartate = N-carbamoyl-L-aspartate + phosphate + H(+). It functions in the pathway pyrimidine metabolism; UMP biosynthesis via de novo pathway; (S)-dihydroorotate from bicarbonate: step 2/3. Its function is as follows. Catalyzes the condensation of carbamoyl phosphate and aspartate to form carbamoyl aspartate and inorganic phosphate, the committed step in the de novo pyrimidine nucleotide biosynthesis pathway. In Mycobacterium marinum (strain ATCC BAA-535 / M), this protein is Aspartate carbamoyltransferase catalytic subunit.